Reading from the N-terminus, the 300-residue chain is MVKQRTLNRVVKASGIGLHSGQKVMINFIPHTVDGGIVFRRIDLDPPVDIPANALLIQEAFMCSNLVTGDIKVGTIEHVMSAIAGLGIDNLIVEVSASEVPIMDGSAGPFIYLLMQGGLCEQDAPKKFIKILKPVEALIDDKKAIFSPHNGFQLNFTIDFDHPAFAKEYQSATIDFSTETFVYEVSEARTFGFMKDLDYLKANNLALGASLDNAIGVDDTGVVNEEGLRFADEFVRHKILDAVGDLYLLGHQIIAKFDGYKSGHALNNQLLRNVQSDPSNYEIVTFNDEKDCPIPYVSVT.

The Zn(2+) site is built by H78, H237, and D241. H264 serves as the catalytic Proton donor.

Belongs to the LpxC family. Requires Zn(2+) as cofactor.

The catalysed reaction is a UDP-3-O-[(3R)-3-hydroxyacyl]-N-acetyl-alpha-D-glucosamine + H2O = a UDP-3-O-[(3R)-3-hydroxyacyl]-alpha-D-glucosamine + acetate. It participates in glycolipid biosynthesis; lipid IV(A) biosynthesis; lipid IV(A) from (3R)-3-hydroxytetradecanoyl-[acyl-carrier-protein] and UDP-N-acetyl-alpha-D-glucosamine: step 2/6. Its function is as follows. Catalyzes the hydrolysis of UDP-3-O-myristoyl-N-acetylglucosamine to form UDP-3-O-myristoylglucosamine and acetate, the committed step in lipid A biosynthesis. In Acinetobacter baumannii (strain ATCC 17978 / DSM 105126 / CIP 53.77 / LMG 1025 / NCDC KC755 / 5377), this protein is UDP-3-O-acyl-N-acetylglucosamine deacetylase.